The sequence spans 323 residues: Beta-ketoacyl-[acyl-carrier-protein] synthase III (323 aa).

Active-site residues include Cys-113 and His-250. Residues 251–255 (QANRR) are ACP-binding. Residue Asn-280 is part of the active site.

The protein belongs to the thiolase-like superfamily. FabH family. In terms of assembly, homodimer.

The protein resides in the cytoplasm. It catalyses the reaction malonyl-[ACP] + acetyl-CoA + H(+) = 3-oxobutanoyl-[ACP] + CO2 + CoA. Its pathway is lipid metabolism; fatty acid biosynthesis. In terms of biological role, catalyzes the condensation reaction of fatty acid synthesis by the addition to an acyl acceptor of two carbons from malonyl-ACP. Catalyzes the first condensation reaction which initiates fatty acid synthesis and may therefore play a role in governing the total rate of fatty acid production. Possesses both acetoacetyl-ACP synthase and acetyl transacylase activities. Its substrate specificity determines the biosynthesis of branched-chain and/or straight-chain of fatty acids. In Rhizobium rhizogenes (strain K84 / ATCC BAA-868) (Agrobacterium radiobacter), this protein is Beta-ketoacyl-[acyl-carrier-protein] synthase III.